Consider the following 737-residue polypeptide: DNA polymerase iota (737 aa).

One can recognise a UmuC domain in the interval 17-231 (IIHLDMDYFY…GDLKRVTGIG (215 aa)). Asp-21 lines the Mg(2+) pocket. 2 residues coordinate a 2'-deoxyribonucleoside 5'-triphosphate: Tyr-26 and Arg-58. Mg(2+) is bound at residue Asp-113. Residue Glu-114 is part of the active site. DNA-binding regions lie at residues 212–277 (TYAE…FGRD) and 288–413 (KTIG…SKFQ). Disordered regions lie at residues 443-464 (TSLTSPTAESPTSDECAFRSSP), 482-515 (SPVPMLLDNGSESAATNSDFSDFSETEVEPSPKK), 557-581 (DSEKDFPMSTTPSTSTSAPAPRFRT), and 607-643 (LSSNASSTASSPLPSPMDDSIAMSAPSTTTLPFPSPT). Residues 491 to 502 (GSESAATNSDFS) are compositionally biased toward polar residues. 3 stretches are compositionally biased toward low complexity: residues 563-577 (PMSTTPSTSTSAPAP), 607-618 (LSSNASSTASSP), and 632-643 (PSTTTLPFPSPT). The Ubiquitin-binding (UBM) motif lies at 669 to 686 (VDAEVFKELPVELQTELI).

Belongs to the DNA polymerase type-Y family. The cofactor is Mg(2+). Mn(2+) is required as a cofactor.

The protein resides in the nucleus. The enzyme catalyses DNA(n) + a 2'-deoxyribonucleoside 5'-triphosphate = DNA(n+1) + diphosphate. In terms of biological role, error-prone DNA polymerase specifically involved in DNA repair. Plays an important role in translesion synthesis, where the normal high-fidelity DNA polymerases cannot proceed and DNA synthesis stalls. Favors Hoogsteen base-pairing in the active site. Inserts the correct base with higher fidelity opposite an adenosine template. Exhibits low fidelity and efficiency opposite a thymidine template, where it will preferentially insert guanosine. Forms a Schiff base with 5'-deoxyribose phosphate at abasic sites, but may not have lyase activity. In Drosophila melanogaster (Fruit fly), this protein is DNA polymerase iota.